The following is a 276-amino-acid chain: Probable NADH-ubiquinone oxidoreductase 30.4 kDa subunit, mitochondrial (276 aa).

The interval Glu-248–Lys-276 is disordered.

This sequence belongs to the complex I 30 kDa subunit family. Complex I is composed of about 30 different subunits. This is a component of the iron-sulfur protein fraction.

The protein localises to the mitochondrion inner membrane. The enzyme catalyses a ubiquinone + NADH + 5 H(+)(in) = a ubiquinol + NAD(+) + 4 H(+)(out). In terms of biological role, core subunit of the mitochondrial membrane respiratory chain NADH dehydrogenase (Complex I) that is believed to belong to the minimal assembly required for catalysis. Complex I functions in the transfer of electrons from NADH to the respiratory chain. The immediate electron acceptor for the enzyme is believed to be ubiquinone. Essential for N-alkane assimilation. This Candida maltosa (Yeast) protein is Probable NADH-ubiquinone oxidoreductase 30.4 kDa subunit, mitochondrial (ALI1).